A 175-amino-acid polypeptide reads, in one-letter code: MIPAYLSNPFAAVFGGGKPIDGGRTYKDGRRILGDGKTYRGLFSGIFCGFLAGCVEVWLSFRGFEILGIEMPGFGPDYTSSLIVVLALASGALFGDMFKSFFKRRMGLKRGASLPLVDQLDFVVGAWVFTYLAAPEWFVSNFTPGIMLTVIIITPLLHLTTNIIGYFIGVKKEPW.

4 helical membrane passes run 41 to 61, 82 to 102, 122 to 142, and 150 to 170; these read GLFSGIFCGFLAGCVEVWLSF, LIVVLALASGALFGDMFKSFF, FVVGAWVFTYLAAPEWFVSNF, and VIIITPLLHLTTNIIGYFIGV.

The protein belongs to the CDP-archaeol synthase family. Mg(2+) serves as cofactor.

It is found in the cell membrane. It catalyses the reaction 2,3-bis-O-(geranylgeranyl)-sn-glycerol 1-phosphate + CTP + H(+) = CDP-2,3-bis-O-(geranylgeranyl)-sn-glycerol + diphosphate. The protein operates within membrane lipid metabolism; glycerophospholipid metabolism. Catalyzes the formation of CDP-2,3-bis-(O-geranylgeranyl)-sn-glycerol (CDP-archaeol) from 2,3-bis-(O-geranylgeranyl)-sn-glycerol 1-phosphate (DGGGP) and CTP. This reaction is the third ether-bond-formation step in the biosynthesis of archaeal membrane lipids. This Methanosarcina mazei (strain ATCC BAA-159 / DSM 3647 / Goe1 / Go1 / JCM 11833 / OCM 88) (Methanosarcina frisia) protein is CDP-archaeol synthase.